The chain runs to 189 residues: Cytochrome b6-f complex subunit 4 (189 aa).

3 helical membrane-spanning segments follow: residues 36-56, 103-123, and 139-159; these read LSYI…GLAV, LLGV…PFLE, and TVSL…ALPI.

This sequence belongs to the cytochrome b family. PetD subfamily. As to quaternary structure, the 4 large subunits of the cytochrome b6-f complex are cytochrome b6, subunit IV (17 kDa polypeptide, petD), cytochrome f and the Rieske protein, while the 4 small subunits are petG, petL, petM and petN. The complex functions as a dimer.

It is found in the plastid. The protein localises to the chloroplast thylakoid membrane. Functionally, component of the cytochrome b6-f complex, which mediates electron transfer between photosystem II (PSII) and photosystem I (PSI), cyclic electron flow around PSI, and state transitions. The sequence is that of Cytochrome b6-f complex subunit 4 from Pinus koraiensis (Korean pine).